The sequence spans 262 residues: Phosphatidylserine decarboxylase proenzyme (262 aa).

Residues Asp-86, His-142, and Ser-226 each act as charge relay system; for autoendoproteolytic cleavage activity in the active site. The Schiff-base intermediate with substrate; via pyruvic acid; for decarboxylase activity role is filled by Ser-226. Ser-226 carries the post-translational modification Pyruvic acid (Ser); by autocatalysis.

The protein belongs to the phosphatidylserine decarboxylase family. PSD-B subfamily. Prokaryotic type I sub-subfamily. Heterodimer of a large membrane-associated beta subunit and a small pyruvoyl-containing alpha subunit. It depends on pyruvate as a cofactor. Is synthesized initially as an inactive proenzyme. Formation of the active enzyme involves a self-maturation process in which the active site pyruvoyl group is generated from an internal serine residue via an autocatalytic post-translational modification. Two non-identical subunits are generated from the proenzyme in this reaction, and the pyruvate is formed at the N-terminus of the alpha chain, which is derived from the carboxyl end of the proenzyme. The autoendoproteolytic cleavage occurs by a canonical serine protease mechanism, in which the side chain hydroxyl group of the serine supplies its oxygen atom to form the C-terminus of the beta chain, while the remainder of the serine residue undergoes an oxidative deamination to produce ammonia and the pyruvoyl prosthetic group on the alpha chain. During this reaction, the Ser that is part of the protease active site of the proenzyme becomes the pyruvoyl prosthetic group, which constitutes an essential element of the active site of the mature decarboxylase.

The protein resides in the cell membrane. The enzyme catalyses a 1,2-diacyl-sn-glycero-3-phospho-L-serine + H(+) = a 1,2-diacyl-sn-glycero-3-phosphoethanolamine + CO2. Its pathway is phospholipid metabolism; phosphatidylethanolamine biosynthesis; phosphatidylethanolamine from CDP-diacylglycerol: step 2/2. Functionally, catalyzes the formation of phosphatidylethanolamine (PtdEtn) from phosphatidylserine (PtdSer). The chain is Phosphatidylserine decarboxylase proenzyme from Bacillus cereus (strain AH820).